The chain runs to 208 residues: Kinetochore protein Spc25 (208 aa).

Residues 31-101 are a coiled coil; sequence SKIAAKHQLI…KKQRRDELMG (71 aa).

This sequence belongs to the SPC25 family. In terms of assembly, component of the Ndc80 complex, which is composed of Ndc80, Nuf2 and Spc25.

The protein localises to the nucleus. It is found in the chromosome. Its subcellular location is the centromere. It localises to the kinetochore. Acts as a component of the essential kinetochore-associated Ndc80 complex, which is required for chromosome segregation and spindle checkpoint activity during meiosis and mitosis. Required for kinetochore integrity and the organization of stable microtubule binding sites in the outer plate of the kinetochore. Participates in SAC signaling that responds specifically to disruptions in spindle microtubule dynamics. The NDC80 complex synergistically enhances the affinity of the SKA1 complex for microtubules and may allow the NDC80 complex to track depolymerizing microtubules. This Drosophila mojavensis (Fruit fly) protein is Kinetochore protein Spc25.